Consider the following 174-residue polypeptide: Acetolactate synthase small subunit (174 aa).

An ACT domain is found at 4 to 78 (TLSVLVQDEA…NILNVQDVTN (75 aa)).

The protein belongs to the acetolactate synthase small subunit family. Dimer of large and small chains.

The protein localises to the plastid. The protein resides in the chloroplast. It catalyses the reaction 2 pyruvate + H(+) = (2S)-2-acetolactate + CO2. It functions in the pathway amino-acid biosynthesis; L-isoleucine biosynthesis; L-isoleucine from 2-oxobutanoate: step 1/4. It participates in amino-acid biosynthesis; L-valine biosynthesis; L-valine from pyruvate: step 1/4. The sequence is that of Acetolactate synthase small subunit (ilvH) from Porphyra purpurea (Red seaweed).